The primary structure comprises 444 residues: MSEMTPRKIVKELNKYIIGQNNAKRAVAIALRNRWRRMQLNSELRNEITPKNILMIGPTGVGKTEIARRLAKLANAPFIKVEATKFTEVGYVGKEVDSIIRDLTDLAIKMIRLQIIKKNKKHAKKRAEERILKILIPVPKDNWNEENLKEKPEKTIQIFRKKLQEGKLDNKEIEIQIAATPIGIEIMSPPGMEELTNQLQSLFQNLSGKKKNLRKLKIKDAMKIIIEEEAAKLINLEELKEKAIYSVEQNSIVFIDEIDKICKHHSSASNSDVSREGVQRDLLPLIEGCTVSTKHGSVKTDHILFIASGAFQTSTPSDLIPELQGRLPIRVELNALTVDDFERILTEPNASITTQYKALIKTEGVDIIFTKKGIRKIAEASWKINESMENIGARRLYTVLEKLMEDISFNSNEKFGQKIYIDEKYVNLHLDKLIENEDLSRFIL.

ATP is bound by residues I18, G60–E65, D256, E322, and R394.

It belongs to the ClpX chaperone family. HslU subfamily. A double ring-shaped homohexamer of HslV is capped on each side by a ring-shaped HslU homohexamer. The assembly of the HslU/HslV complex is dependent on binding of ATP.

Its subcellular location is the cytoplasm. Its function is as follows. ATPase subunit of a proteasome-like degradation complex; this subunit has chaperone activity. The binding of ATP and its subsequent hydrolysis by HslU are essential for unfolding of protein substrates subsequently hydrolyzed by HslV. HslU recognizes the N-terminal part of its protein substrates and unfolds these before they are guided to HslV for hydrolysis. The protein is ATP-dependent protease ATPase subunit HslU of Buchnera aphidicola subsp. Cinara cedri (strain Cc).